The following is a 254-amino-acid chain: Triosephosphate isomerase (254 aa).

12-14 (NWK) is a binding site for substrate. Residue His99 is the Electrophile of the active site. Glu169 serves as the catalytic Proton acceptor. Substrate-binding positions include Gly175, Ser214, and 235-236 (GG).

It belongs to the triosephosphate isomerase family. Homodimer.

It localises to the cytoplasm. It carries out the reaction D-glyceraldehyde 3-phosphate = dihydroxyacetone phosphate. The protein operates within carbohydrate biosynthesis; gluconeogenesis. Its pathway is carbohydrate degradation; glycolysis; D-glyceraldehyde 3-phosphate from glycerone phosphate: step 1/1. Its function is as follows. Involved in the gluconeogenesis. Catalyzes stereospecifically the conversion of dihydroxyacetone phosphate (DHAP) to D-glyceraldehyde-3-phosphate (G3P). The chain is Triosephosphate isomerase from Brucella abortus biovar 1 (strain 9-941).